We begin with the raw amino-acid sequence, 144 residues long: Glycine-rich protein DC9.1 (144 aa).

Residues 5–25 form a helical membrane-spanning segment; it reads IFLLLGLSIAFAILISSEVAA. Tandem repeats lie at residues 37–42, 43–48, 50–55, 56–61, 63–68, 69–74, 76–81, 82–87, 89–94, 102–107, and 108–113. The segment at 37–113 is 11 X 6 AA tandem repeats of G-Y-[NH]-N-G -G; sequence GYNNGGGYHN…NNGGGHHGGG (77 aa).

It belongs to the GRP family.

The protein localises to the membrane. In Daucus carota (Wild carrot), this protein is Glycine-rich protein DC9.1.